A 196-amino-acid polypeptide reads, in one-letter code: Molybdenum cofactor guanylyltransferase (196 aa).

GTP-binding positions include 10–12, Lys23, Asn51, Asp69, and Asp99; that span reads LAG. Mg(2+) is bound at residue Asp99.

The protein belongs to the MobA family. As to quaternary structure, monomer. Requires Mg(2+) as cofactor.

The protein localises to the cytoplasm. The enzyme catalyses Mo-molybdopterin + GTP + H(+) = Mo-molybdopterin guanine dinucleotide + diphosphate. Transfers a GMP moiety from GTP to Mo-molybdopterin (Mo-MPT) cofactor (Moco or molybdenum cofactor) to form Mo-molybdopterin guanine dinucleotide (Mo-MGD) cofactor. The sequence is that of Molybdenum cofactor guanylyltransferase from Shewanella woodyi (strain ATCC 51908 / MS32).